The primary structure comprises 300 residues: tRNA dimethylallyltransferase (300 aa).

11–18 (GPTAVGKS) contributes to the ATP binding site. 13-18 (TAVGKS) is a substrate binding site. Residues 35 to 38 (DSIQ) form an interaction with substrate tRNA region.

Belongs to the IPP transferase family. Monomer. Mg(2+) serves as cofactor.

The enzyme catalyses adenosine(37) in tRNA + dimethylallyl diphosphate = N(6)-dimethylallyladenosine(37) in tRNA + diphosphate. Its function is as follows. Catalyzes the transfer of a dimethylallyl group onto the adenine at position 37 in tRNAs that read codons beginning with uridine, leading to the formation of N6-(dimethylallyl)adenosine (i(6)A). This chain is tRNA dimethylallyltransferase, found in Borrelia recurrentis (strain A1).